Here is a 318-residue protein sequence, read N- to C-terminus: sn-1 stearoyl-lipid 9-desaturase (318 aa).

Transmembrane regions (helical) follow at residues 56–76 (VIFF…PQFF) and 80–100 (AVGM…TLGF). The Histidine box-1 signature appears at 101-106 (HRCISH). The chain crosses the membrane as a helical span at residues 117 to 137 (YIFVICGTLACQGGVFEWVGL). The Histidine box-2 motif lies at 138 to 142 (HRMHH). The chain crosses the membrane as a helical span at residues 201-221 (VALGLILFALGGWPFVIWGIF). Positions 271–275 (HHAYQ) match the Histidine box-3 motif.

Belongs to the fatty acid desaturase type 2 family. The cofactor is Fe(2+).

It localises to the cellular thylakoid membrane. It carries out the reaction a 1-octadecanoyl 2-acyl-glycerolipid + 2 reduced [2Fe-2S]-[ferredoxin] + O2 + 2 H(+) = a 1-[(9Z)-octadecenoyl]-2-acyl-glycerolipid + 2 oxidized [2Fe-2S]-[ferredoxin] + 2 H2O. The protein operates within lipid metabolism; polyunsaturated fatty acid biosynthesis. Desaturase involved in fatty acid biosynthesis. Introduces a double bond at carbon 9 of stearoyl groups (18:0) attached to the sn-1 position of the glycerol moiety of membrane glycerolipids. Does not desaturate palmitic acid (16:0), palmitoleic acid (16:1) and cis-vaccenic acid (18:1). This Synechocystis sp. (strain ATCC 27184 / PCC 6803 / Kazusa) protein is sn-1 stearoyl-lipid 9-desaturase.